Consider the following 427-residue polypeptide: MSNSTALFQRARQVIPGGVNSPVRAFKGVGGTPVFIQKAAGAYITDTDGKQYIDYVGSWGPMVLGHNHPAIIDAVLKAVPNGLSFGAPTEGEITLAELVCRLIPSIELVRMVSSGTEATMSAIRLARGYTKRDKIIKFEGCYHGHSDSLLVKAGSGALTLGQPSSPGVPEDFAKHTLTCTYNDLNSVKCAFERYPQDIACLIIEPVAGNMNCVPPKPGFLQGVRELCDQYGALLIIDEVMTGFRVALGGAQAYYGVTPDLTALGKIIGGGMPVGAFGGKREIMEYIAPTGPVYQAGTLSGNPIAMAAGLACLTELSKPGNEQQLAEKTQQLAEGLKTLAKKHGVPFIAQYVGGMFGLFFTDVPEVTNFQDVMKCDVAKFNRFFHLMLEQGVYLAPSAFEAGFMSLAHSDADIEQTLKAADNAFAVLA.

Residue Lys-265 is modified to N6-(pyridoxal phosphate)lysine.

Belongs to the class-III pyridoxal-phosphate-dependent aminotransferase family. HemL subfamily. Homodimer. Pyridoxal 5'-phosphate serves as cofactor.

The protein localises to the cytoplasm. It catalyses the reaction (S)-4-amino-5-oxopentanoate = 5-aminolevulinate. The protein operates within porphyrin-containing compound metabolism; protoporphyrin-IX biosynthesis; 5-aminolevulinate from L-glutamyl-tRNA(Glu): step 2/2. This Actinobacillus succinogenes (strain ATCC 55618 / DSM 22257 / CCUG 43843 / 130Z) protein is Glutamate-1-semialdehyde 2,1-aminomutase.